Reading from the N-terminus, the 184-residue chain is Signal peptidase I S (184 aa).

Residues 1-18 lie on the Cytoplasmic side of the membrane; that stretch reads MKSENVSKKKSILEWAKA. The helical transmembrane segment at 19–39 threads the bilayer; sequence IVIAVVLALLIRNFIFAPYVV. The Extracellular portion of the chain corresponds to 40 to 184; it reads DGDSMYPTLH…YPFNEMRKTN (145 aa). Residues Ser-43 and Lys-83 contribute to the active site.

The protein belongs to the peptidase S26 family.

It localises to the cell membrane. The catalysed reaction is Cleavage of hydrophobic, N-terminal signal or leader sequences from secreted and periplasmic proteins.. Its function is as follows. Not essential for cell viability, but required for efficient secretion of many proteins. The chain is Signal peptidase I S (sipS) from Bacillus subtilis (strain 168).